A 373-amino-acid polypeptide reads, in one-letter code: Dof zinc finger protein 3 (373 aa).

The tract at residues 1 to 23 (MASGGALSPVEEKPTVVKTTKAE) is disordered. Over residues 10–23 (VEEKPTVVKTTKAE) the composition is skewed to basic and acidic residues. The Dof-type zinc-finger motif lies at 45–99 (PCCPRCNSIKTKFCYYNNYSMAQPRYFCRECRRYWTQGGSLRNVPVGGGCRKSKR). Cysteine 47, cysteine 50, cysteine 72, and cysteine 75 together coordinate Zn(2+). A disordered region spans residues 297–327 (ALGGADEQQGGGDGGEAVMTKDTGGGASSSA).

As to quaternary structure, interacts with RISBZ1/BZIP58.

It localises to the nucleus. Functionally, transcriptional activator that binds specifically to the DNA consensus core sequence 5'-AAAG-3' also known as prolamin box. Can activate the expression of genes encoding for the seed storage proteins glutelin, prolamin and globulin. Functions synergistically with RISBZ/BZIP58 to positively regulate quantitatively many seed storage proteins. Functions synergistically with RISBZ1/BZIP58 to positively regulate some metabolic enzymes, such as alanine aminotransferase and pyruvate phosphate dikinase, that are expressed in developing seeds. Functions synergistically with RISBZ1/BZIP58 to positively regulate genes that are key players in the development of aleurone layers. Functions synergistically with RISBZ1/BZIP58 to positively regulate the glutelin GLUD-1 gene in endosperm of developing seeds. Can activate the expression of the bifunctional lysine-degrading enzyme, lysine ketoglutarate reductase/saccharopine dehydrogenase (LKR/SDH), one of the key regulators determining free lysine content in plants. In germinating seeds, involved in the gibberellin-mediated activation of the alpha-amylase AMY1.1/AMY1A gene. The protein is Dof zinc finger protein 3 of Oryza sativa subsp. japonica (Rice).